A 316-amino-acid chain; its full sequence is Methionyl-tRNA formyltransferase (316 aa).

113–116 is a (6S)-5,6,7,8-tetrahydrofolate binding site; sequence SLLP.

This sequence belongs to the Fmt family.

The catalysed reaction is L-methionyl-tRNA(fMet) + (6R)-10-formyltetrahydrofolate = N-formyl-L-methionyl-tRNA(fMet) + (6S)-5,6,7,8-tetrahydrofolate + H(+). In terms of biological role, attaches a formyl group to the free amino group of methionyl-tRNA(fMet). The formyl group appears to play a dual role in the initiator identity of N-formylmethionyl-tRNA by promoting its recognition by IF2 and preventing the misappropriation of this tRNA by the elongation apparatus. In Sodalis glossinidius (strain morsitans), this protein is Methionyl-tRNA formyltransferase.